The following is a 556-amino-acid chain: CTP synthase (556 aa).

The interval 1–266 is amidoligase domain; sequence MKYIFVTGGV…GKVVEDLLGL (266 aa). Ser12 lines the CTP pocket. Ser12 lines the UTP pocket. 13–18 contributes to the ATP binding site; that stretch reads SLGKGV. Residue Tyr53 coordinates L-glutamine. Asp70 contacts ATP. Mg(2+) is bound by residues Asp70 and Glu140. Residues 147-149, 187-192, and Lys223 contribute to the CTP site; these read DIE and KTKPTQ. Residues 187–192 and Lys223 contribute to the UTP site; that span reads KTKPTQ. The Glutamine amidotransferase type-1 domain occupies 291 to 544; that stretch reads TIAIAGKYTE…VKAALRGQSS (254 aa). Gly356 serves as a coordination point for L-glutamine. Cys383 functions as the Nucleophile; for glutamine hydrolysis in the catalytic mechanism. L-glutamine is bound by residues 384-387, Glu407, and Arg467; that span reads LGMQ. Active-site residues include His517 and Glu519.

This sequence belongs to the CTP synthase family. Homotetramer.

The catalysed reaction is UTP + L-glutamine + ATP + H2O = CTP + L-glutamate + ADP + phosphate + 2 H(+). It carries out the reaction L-glutamine + H2O = L-glutamate + NH4(+). It catalyses the reaction UTP + NH4(+) + ATP = CTP + ADP + phosphate + 2 H(+). Its pathway is pyrimidine metabolism; CTP biosynthesis via de novo pathway; CTP from UDP: step 2/2. With respect to regulation, allosterically activated by GTP, when glutamine is the substrate; GTP has no effect on the reaction when ammonia is the substrate. The allosteric effector GTP functions by stabilizing the protein conformation that binds the tetrahedral intermediate(s) formed during glutamine hydrolysis. Inhibited by the product CTP, via allosteric rather than competitive inhibition. In terms of biological role, catalyzes the ATP-dependent amination of UTP to CTP with either L-glutamine or ammonia as the source of nitrogen. Regulates intracellular CTP levels through interactions with the four ribonucleotide triphosphates. The protein is CTP synthase of Deinococcus deserti (strain DSM 17065 / CIP 109153 / LMG 22923 / VCD115).